The sequence spans 108 residues: Ig kappa chain V-V region HP 123E6 (108 aa).

Residues 1-23 (DIQMTQSTSSLSASLGDRVTISC) are framework-1. Cysteine 23 and cysteine 88 are oxidised to a cystine. Residues 24-34 (RASQDISNYLN) are complementarity-determining-1. The segment at 35–49 (WYQQKPDGTVKLLIY) is framework-2. A complementarity-determining-2 region spans residues 50–56 (YTSRLHS). The tract at residues 57-88 (GVPSRFSGSGSGTDYSLTISNLEQEDIATYFC) is framework-3. The interval 89-97 (QQGYMLPRT) is complementarity-determining-3. Positions 98–108 (FGGGTKLEIKR) are framework-4.

The chain is Ig kappa chain V-V region HP 123E6 from Mus musculus (Mouse).